We begin with the raw amino-acid sequence, 596 residues long: Aspartate--tRNA(Asp/Asn) ligase (596 aa).

Glu-175 contacts L-aspartate. The aspartate stretch occupies residues Gln-199 to Lys-202. Residues Arg-221 and His-454 each contribute to the L-aspartate site. Arg-221 to Glu-223 provides a ligand contact to ATP. Glu-488 provides a ligand contact to ATP. Arg-495 lines the L-aspartate pocket. Gly-540 to Arg-543 is an ATP binding site.

Belongs to the class-II aminoacyl-tRNA synthetase family. Type 1 subfamily. Homodimer.

The protein resides in the cytoplasm. The catalysed reaction is tRNA(Asx) + L-aspartate + ATP = L-aspartyl-tRNA(Asx) + AMP + diphosphate. Its function is as follows. Aspartyl-tRNA synthetase with relaxed tRNA specificity since it is able to aspartylate not only its cognate tRNA(Asp) but also tRNA(Asn). Reaction proceeds in two steps: L-aspartate is first activated by ATP to form Asp-AMP and then transferred to the acceptor end of tRNA(Asp/Asn). This Rhizobium rhizogenes (strain K84 / ATCC BAA-868) (Agrobacterium radiobacter) protein is Aspartate--tRNA(Asp/Asn) ligase.